A 283-amino-acid chain; its full sequence is 4-diphosphocytidyl-2-C-methyl-D-erythritol kinase (283 aa).

The active site involves K10. Residue 99–109 (PMGGGLGGGSS) coordinates ATP. D141 is an active-site residue.

Belongs to the GHMP kinase family. IspE subfamily. As to quaternary structure, homodimer.

It carries out the reaction 4-CDP-2-C-methyl-D-erythritol + ATP = 4-CDP-2-C-methyl-D-erythritol 2-phosphate + ADP + H(+). It participates in isoprenoid biosynthesis; isopentenyl diphosphate biosynthesis via DXP pathway; isopentenyl diphosphate from 1-deoxy-D-xylulose 5-phosphate: step 3/6. Functionally, catalyzes the phosphorylation of the position 2 hydroxy group of 4-diphosphocytidyl-2C-methyl-D-erythritol. The protein is 4-diphosphocytidyl-2-C-methyl-D-erythritol kinase of Salmonella typhi.